A 203-amino-acid polypeptide reads, in one-letter code: Thymidylate kinase (203 aa).

7 to 14 (GPDGSGKS) is a binding site for ATP.

This sequence belongs to the thymidylate kinase family.

It catalyses the reaction dTMP + ATP = dTDP + ADP. In terms of biological role, phosphorylation of dTMP to form dTDP in both de novo and salvage pathways of dTTP synthesis. The polypeptide is Thymidylate kinase (Finegoldia magna (strain ATCC 29328 / DSM 20472 / WAL 2508) (Peptostreptococcus magnus)).